A 127-amino-acid chain; its full sequence is Dual endothelin-1/VEGF signal peptide receptor (127 aa).

Residues 1–69 (MSTFYVTAVP…EMKSRWNWGS (69 aa)) are Extracellular-facing. Residues 70 to 88 (ITCIMCFTCVGSQLSMSSS) form a helical membrane-spanning segment. Residues 89–127 (KASNFSGPLQLYQRGIGHITNPYRRPPAPAWPCSSSGTT) are Cytoplasmic-facing.

As to expression, prominently expressed in brain and heart tissues. Weakly expressed in aorta, adrenal gland, and lung tissues.

The protein localises to the cell membrane. In the Dahl salt-resistant strain, acts as a dual receptor for both endothelin-1 and the signal sequence of vascular endothelial growth factor A and does not act as a receptor for angiotensin-2. Does not bind the VEGFA mature protein. In the Dahl salt-sensitive strain, acts as a dual endothelin-1/angiotensin-2 receptor that is functionally coupled to a calcium-mobilizing transduction system, responding equivalently to both endothelin-1/EDN1 and angiotensin-2 peptides in a highly specific manner. May play a role in angiogenesis with a significant role in cardiovascular and neural development. This chain is Dual endothelin-1/VEGF signal peptide receptor, found in Rattus norvegicus (Rat).